Here is a 952-residue protein sequence, read N- to C-terminus: Histone deacetylase 7 (952 aa).

Transcription repression stretches follow at residues 1–268 and 218–546; these read MDLR…DSDR and GPNP…EHAG. The tract at residues 49–149 is interaction with MEF2A; it reads SMDTPMPELQ…LPSDPPEHFP (101 aa). Residue Ser-109 is modified to Phosphoserine. Disordered regions lie at residues 130–224 and 261–283; these read LSSF…PILG and PARADSDRRTHPTLGPRGPILGS. Phosphoserine; by MARK2, MARK3 and PKD/PRKD1 is present on Ser-155. Residues 167-181 show a composition bias toward basic and acidic residues; sequence KSLERRKNPLLRKES. Ser-181 is modified (phosphoserine; by PKD/PRKD2). Positions 197–212 are enriched in low complexity; the sequence is SSPSSSSTPASGCSSP. Phosphoserine is present on Ser-283. At Thr-286 the chain carries Phosphothreonine. Disordered regions lie at residues 349–377, 389–441, and 460–510; these read LHWPLSRTRSEPLPPSATAPPPPGPMQPR, KRSA…GPAP, and LPRG…SSSE. The residue at position 358 (Ser-358) is a Phosphoserine; by PKD/PRKD1. A compositionally biased stretch (pro residues) spans 360–374; it reads PLPPSATAPPPPGPM. A phosphoserine mark is found at Ser-364, Ser-405, Ser-486, Ser-487, and Ser-507. Over residues 482-503 the composition is skewed to low complexity; the sequence is SRAQSSPAAPASLSAPEPASQA. Residues 512–865 are histone deacetylase; the sequence is PARTLPFTTG…VAALLGNRVD (354 aa). Residues Cys-533, Cys-535, and His-541 each contribute to the Zn(2+) site. Ser-595 is subject to Phosphoserine. Residue Cys-618 coordinates Zn(2+). The active site involves His-670. The interaction with SIN3A stretch occupies residues 877-952; sequence NLNAIRSLEA…LVEEEEPMNL (76 aa). The Nuclear export signal signature appears at 917-952; it reads KEEVEAVTALASLSVGILAEDRPSEQLVEEEEPMNL.

This sequence belongs to the histone deacetylase family. HD type 2 subfamily. As to quaternary structure, interacts with HDAC1, HDAC2, HDAC3, HDAC4, HDAC5, NCOR1, NCOR2, SIN3A, SIN3B, RBBP4, RBBP7, MTA1L1, SAP30 and MBD3. Interacts with KAT5 and EDNRA. Interacts with the 14-3-3 protein YWHAE, MEF2A, MEF2B and MEF2C. Interacts with ZMYND15. Interacts with KDM5B. Interacts with PML. Interacts with FOXP3. Interacts with RARA. Post-translationally, may be phosphorylated by CaMK1. Phosphorylated by the PKC kinases PKN1 and PKN2, impairing nuclear import. Phosphorylation at Ser-155 by MARK2, MARK3 and PRKD1 promotes interaction with 14-3-3 proteins and export from the nucleus. Phosphorylation at Ser-155 is a prerequisite for phosphorylation at Ser-181.

It localises to the nucleus. The protein localises to the cytoplasm. The enzyme catalyses N(6)-acetyl-L-lysyl-[histone] + H2O = L-lysyl-[histone] + acetate. It catalyses the reaction N(6)-acetyl-L-lysyl-[protein] + H2O = L-lysyl-[protein] + acetate. Its function is as follows. Responsible for the deacetylation of lysine residues on the N-terminal part of the core histones (H2A, H2B, H3 and H4). Histone deacetylation gives a tag for epigenetic repression and plays an important role in transcriptional regulation, cell cycle progression and developmental events. Histone deacetylases act via the formation of large multiprotein complexes. Involved in muscle maturation by repressing transcription of myocyte enhancer factors such as MEF2A, MEF2B and MEF2C. During muscle differentiation, it shuttles into the cytoplasm, allowing the expression of myocyte enhancer factors. May be involved in Epstein-Barr virus (EBV) latency, possibly by repressing the viral BZLF1 gene. Positively regulates the transcriptional repressor activity of FOXP3. Serves as a corepressor of RARA, causing its deacetylation and inhibition of RARE DNA element binding. In association with RARA, plays a role in the repression of microRNA-10a and thereby in the inflammatory response. Also acetylates non-histone proteins, such as ALKBH5. The protein is Histone deacetylase 7 (HDAC7) of Homo sapiens (Human).